The chain runs to 312 residues: Pyridoxal kinase (312 aa).

Residue Met-1 is modified to N-acetylmethionine. The pyridoxal site is built by Ser-12 and Thr-47. Thr-47 contacts pyridoxal 5'-phosphate. Ser-59 carries the phosphoserine modification. Residue Asp-113 participates in ATP binding. A Na(+)-binding site is contributed by Asp-113. Residue Asp-118 participates in Mg(2+) binding. Thr-148 contributes to the Na(+) binding site. 150-153 (NQFE) provides a ligand contact to ATP. A Phosphoserine modification is found at Ser-164. Position 186 (Thr-186) interacts with Na(+). 186–187 (TS) provides a ligand contact to ATP. Ser-213 carries the post-translational modification Phosphoserine. Residues 226–228 (VDA) and Thr-233 each bind ATP. 234-235 (GD) lines the pyridoxal 5'-phosphate pocket. Asp-235 functions as the Proton acceptor in the catalytic mechanism. Ser-285 is modified (phosphoserine).

The protein belongs to the pyridoxine kinase family. Homodimer. Mg(2+) is required as a cofactor. Zn(2+) serves as cofactor. Requires Co(2+) as cofactor. It depends on Mn(2+) as a cofactor. As to expression, ubiquitous. Highly expressed in testis. In adult testis and spermatozoa.

The protein localises to the cytoplasm. It localises to the cytosol. The catalysed reaction is pyridoxal + ATP = pyridoxal 5'-phosphate + ADP + H(+). The enzyme catalyses pyridoxamine + ATP = pyridoxamine 5'-phosphate + ADP + H(+). It carries out the reaction pyridoxine + ATP = pyridoxine 5'-phosphate + ADP + H(+). It functions in the pathway cofactor metabolism; pyridoxal 5'-phosphate salvage; pyridoxal 5'-phosphate from pyridoxal: step 1/1. It participates in cofactor metabolism; pyridoxal 5'-phosphate salvage; pyridoxine 5'-phosphate from pyridoxine: step 1/1. Its pathway is cofactor metabolism; pyridoxal 5'-phosphate salvage; pyridoxamine 5'-phosphate from pyridoxamine: step 1/1. With respect to regulation, catalytic activity is inhibited competitively by 4-deoxypyridoxine, and is also inhibited by the benzodiazepine receptor ligands 1012S and ethyl-beta-carboline-3-carboxylate. Inhibited by ginkgotoxin, theophylline, lamotrigine, enprofylline, theobromine, and caffeine. Activity is increased in the presence of K(+)or Na(+). In terms of biological role, catalyzes the phosphorylation of the dietary vitamin B6 vitamers pyridoxal (PL), pyridoxine (PN) and pyridoxamine (PM) to form pyridoxal 5'-phosphate (PLP), pyridoxine 5'-phosphate (PNP) and pyridoxamine 5'-phosphate (PMP), respectively. PLP is the active form of vitamin B6, and acts as a cofactor for over 140 different enzymatic reactions. The protein is Pyridoxal kinase of Homo sapiens (Human).